Reading from the N-terminus, the 264-residue chain is 3-methyl-2-oxobutanoate hydroxymethyltransferase (264 aa).

Positions 45 and 84 each coordinate Mg(2+). Residues 45 to 46, D84, and K112 each bind 3-methyl-2-oxobutanoate; that span reads DS. Mg(2+) is bound at residue E114. E181 (proton acceptor) is an active-site residue.

This sequence belongs to the PanB family. Homodecamer; pentamer of dimers. It depends on Mg(2+) as a cofactor.

Its subcellular location is the cytoplasm. The enzyme catalyses 3-methyl-2-oxobutanoate + (6R)-5,10-methylene-5,6,7,8-tetrahydrofolate + H2O = 2-dehydropantoate + (6S)-5,6,7,8-tetrahydrofolate. It functions in the pathway cofactor biosynthesis; (R)-pantothenate biosynthesis; (R)-pantoate from 3-methyl-2-oxobutanoate: step 1/2. In terms of biological role, catalyzes the reversible reaction in which hydroxymethyl group from 5,10-methylenetetrahydrofolate is transferred onto alpha-ketoisovalerate to form ketopantoate. This is 3-methyl-2-oxobutanoate hydroxymethyltransferase from Tolumonas auensis (strain DSM 9187 / NBRC 110442 / TA 4).